A 410-amino-acid polypeptide reads, in one-letter code: Peptidase T (410 aa).

Residue H79 participates in Zn(2+) binding. Residue D81 is part of the active site. D142 is a Zn(2+) binding site. The active-site Proton acceptor is E176. E177, D199, and H381 together coordinate Zn(2+).

It belongs to the peptidase M20B family. It depends on Zn(2+) as a cofactor.

It localises to the cytoplasm. The catalysed reaction is Release of the N-terminal residue from a tripeptide.. In terms of biological role, cleaves the N-terminal amino acid of tripeptides. The chain is Peptidase T from Bacillus cereus (strain G9842).